The following is a 140-amino-acid chain: MGSCVSKGKGDDDSVHNVEFSGGNVHLITTKESWDDKLAEADRDGKIVVANFSATWCGPCKIVAPFFIELSEKHSSLMFLLVDVDELSDFSSSWDIKATPTFFFLKNGQQIGKLVGANKPELQKKVTSIIDSVPESPQRP.

Gly2 is lipidated: N-myristoyl glycine. A lipid anchor (S-palmitoyl cysteine) is attached at Cys4. Ser14 carries the phosphoserine modification. The Thioredoxin domain occupies 25-129 (VHLITTKESW…PELQKKVTSI (105 aa)). Catalysis depends on nucleophile residues Cys57 and Cys60. A disulfide bridge links Cys57 with Cys60. Ser136 is modified (phosphoserine).

It belongs to the thioredoxin family. Plant H-type subfamily. Ubiquitous.

It localises to the cell membrane. Probable thiol-disulfide oxidoreductase that may play a role in intercellular communication due to its ability to move from cell to cell. This Arabidopsis thaliana (Mouse-ear cress) protein is Thioredoxin H9 (TRX9).